The sequence spans 247 residues: LHFPL tetraspan subfamily member 4 protein (247 aa).

4 helical membrane passes run 22 to 42 (IGVL…VVFI), 97 to 117 (FFVL…SLFF), 127 to 147 (ICAW…MIFP), and 178 to 198 (ILAI…FVLG).

This sequence belongs to the LHFP family. In terms of assembly, interacts with GABA(A) receptor subunits. Identified in a complex of 720 kDa composed of LHFPL4, NLGN2, GABRA1, GABRB2, GABRG2 and GABRB3. Interacts with GABRB3. Interacts with GABRA2. Interacts with GABRG2. Interacts with GABRA1. Interacts with NLGN2; leading to mutual regulation of protein level and synaptic clustering.

The protein resides in the cell projection. Its subcellular location is the dendrite. The protein localises to the postsynaptic cell membrane. Functionally, plays a role in the regulation of inhibitory synapse formation and function by being involved in maintening gamma-aminobutyric acid receptors (GABAARs) clustering and their associated scaffold proteins at inhibitory synaptic sites. Acts in concert with NLGN2 to recruit or stabilize GABAARs. This is LHFPL tetraspan subfamily member 4 protein from Homo sapiens (Human).